A 332-amino-acid polypeptide reads, in one-letter code: Fructose-1,6-bisphosphatase class 1 (332 aa).

Mg(2+) contacts are provided by glutamate 89, aspartate 110, leucine 112, and aspartate 113. Substrate is bound by residues 113–116 (DGSS), asparagine 206, tyrosine 239, 257–259 (YLY), and lysine 269. Glutamate 275 is a binding site for Mg(2+).

The protein belongs to the FBPase class 1 family. As to quaternary structure, homotetramer. It depends on Mg(2+) as a cofactor.

Its subcellular location is the cytoplasm. It catalyses the reaction beta-D-fructose 1,6-bisphosphate + H2O = beta-D-fructose 6-phosphate + phosphate. It functions in the pathway carbohydrate biosynthesis; gluconeogenesis. The chain is Fructose-1,6-bisphosphatase class 1 from Cronobacter sakazakii (strain ATCC BAA-894) (Enterobacter sakazakii).